We begin with the raw amino-acid sequence, 329 residues long: MPIPMLPAHVPTIDISPLSGGDADDKKRVAQEINKACRESGFFYASHHGIDVQLLKDVVNEFHRTMTDEEKYDLAINAYNKNNPRTRNGYYMAVKGKKAVESWCYLNPSFSEDHPQIRSGTPMHEGNIWPDEKRHQRFRPFCEQYYRDVFSLSKVLMRGFALALGKPEDFFDASLSLADTLSAVTLIHYPYLEDYPPVKTGPDGTKLSFEDHLDVSMITVLFQTEVQNLQVETADGWQDLPTSGENFLVNCGTYMGYLTNDYFPAPNHRVKFINAERLSLPFFLHAGHTTVMEPFSPEDTRGKELNPPVRYGDYLQQASNALIAKNGQT.

Isopenicillin N-binding residues include Arg-87, Tyr-91, and Tyr-189. Residues Arg-87, Tyr-91, Tyr-189, His-212, and Asp-214 each contribute to the N-[(5S)-5-amino-5-carboxypentanoyl]-L-cysteinyl-D-valine site. The Fe2OG dioxygenase domain maps to 180–286 (TLSAVTLIHY…RLSLPFFLHA (107 aa)). Fe(2+) contacts are provided by His-212, Asp-214, and His-268. Arg-277 serves as a coordination point for 2-oxoglutarate. Ser-279 serves as a coordination point for isopenicillin N. Ser-279 is a binding site for N-[(5S)-5-amino-5-carboxypentanoyl]-L-cysteinyl-D-valine.

It belongs to the iron/ascorbate-dependent oxidoreductase family. The cofactor is Fe cation. L-ascorbate is required as a cofactor.

It carries out the reaction N-[(5S)-5-amino-5-carboxypentanoyl]-L-cysteinyl-D-valine + O2 = isopenicillin N + 2 H2O. The protein operates within antibiotic biosynthesis; penicillin G biosynthesis; penicillin G from L-alpha-aminoadipate and L-cysteine and L-valine: step 2/3. Its function is as follows. Removes, in the presence of oxygen, 4 hydrogen atoms from delta-L-(alpha-aminoadipyl)-L-cysteinyl-D-valine (ACV) to form the azetidinone and thiazolidine rings of isopenicillin. In Streptomyces griseus, this protein is Isopenicillin N synthase (pcbC).